The primary structure comprises 363 residues: UDP-N-acetylglucosamine--N-acetylmuramyl-(pentapeptide) pyrophosphoryl-undecaprenol N-acetylglucosamine transferase (363 aa).

UDP-N-acetyl-alpha-D-glucosamine is bound by residues 10-12 (TGG), Asn124, Ser195, Ile250, and Gln295.

This sequence belongs to the glycosyltransferase 28 family. MurG subfamily.

The protein resides in the cell membrane. It catalyses the reaction di-trans,octa-cis-undecaprenyl diphospho-N-acetyl-alpha-D-muramoyl-L-alanyl-D-glutamyl-meso-2,6-diaminopimeloyl-D-alanyl-D-alanine + UDP-N-acetyl-alpha-D-glucosamine = di-trans,octa-cis-undecaprenyl diphospho-[N-acetyl-alpha-D-glucosaminyl-(1-&gt;4)]-N-acetyl-alpha-D-muramoyl-L-alanyl-D-glutamyl-meso-2,6-diaminopimeloyl-D-alanyl-D-alanine + UDP + H(+). Its pathway is cell wall biogenesis; peptidoglycan biosynthesis. Its function is as follows. Cell wall formation. Catalyzes the transfer of a GlcNAc subunit on undecaprenyl-pyrophosphoryl-MurNAc-pentapeptide (lipid intermediate I) to form undecaprenyl-pyrophosphoryl-MurNAc-(pentapeptide)GlcNAc (lipid intermediate II). This Listeria monocytogenes serotype 4b (strain CLIP80459) protein is UDP-N-acetylglucosamine--N-acetylmuramyl-(pentapeptide) pyrophosphoryl-undecaprenol N-acetylglucosamine transferase.